Reading from the N-terminus, the 122-residue chain is Ribosome-binding factor A (122 aa).

It belongs to the RbfA family. As to quaternary structure, monomer. Binds 30S ribosomal subunits, but not 50S ribosomal subunits or 70S ribosomes.

Its subcellular location is the cytoplasm. Functionally, one of several proteins that assist in the late maturation steps of the functional core of the 30S ribosomal subunit. Associates with free 30S ribosomal subunits (but not with 30S subunits that are part of 70S ribosomes or polysomes). Required for efficient processing of 16S rRNA. May interact with the 5'-terminal helix region of 16S rRNA. In Cupriavidus necator (strain ATCC 17699 / DSM 428 / KCTC 22496 / NCIMB 10442 / H16 / Stanier 337) (Ralstonia eutropha), this protein is Ribosome-binding factor A.